Consider the following 298-residue polypeptide: UDP-N-acetylenolpyruvoylglucosamine reductase (298 aa).

Positions 27-191 constitute an FAD-binding PCMH-type domain; the sequence is TGGEADVFVM…LDATFSLALE (165 aa). Residue arginine 170 is part of the active site. Serine 220 (proton donor) is an active-site residue. Glutamate 290 is an active-site residue.

The protein belongs to the MurB family. It depends on FAD as a cofactor.

Its subcellular location is the cytoplasm. The catalysed reaction is UDP-N-acetyl-alpha-D-muramate + NADP(+) = UDP-N-acetyl-3-O-(1-carboxyvinyl)-alpha-D-glucosamine + NADPH + H(+). Its pathway is cell wall biogenesis; peptidoglycan biosynthesis. In terms of biological role, cell wall formation. In Listeria monocytogenes serotype 4a (strain HCC23), this protein is UDP-N-acetylenolpyruvoylglucosamine reductase.